A 386-amino-acid chain; its full sequence is Phosphoglycerate kinase (386 aa).

Residues 21-23 (DLN), Arg-36, 59-62 (HLGR), Arg-113, and Arg-146 contribute to the substrate site. ATP is bound by residues Lys-197, Glu-314, and 340-343 (GGDT).

The protein belongs to the phosphoglycerate kinase family. As to quaternary structure, monomer.

The protein resides in the cytoplasm. It catalyses the reaction (2R)-3-phosphoglycerate + ATP = (2R)-3-phospho-glyceroyl phosphate + ADP. It participates in carbohydrate degradation; glycolysis; pyruvate from D-glyceraldehyde 3-phosphate: step 2/5. This is Phosphoglycerate kinase from Ectopseudomonas mendocina (strain ymp) (Pseudomonas mendocina).